The sequence spans 486 residues: Elastin-binding protein EbpS (486 aa).

Basic and acidic residues predominate over residues Met1–Thr40. A disordered region spans residues Met1–Lys314. Over Ser2–Lys204 the chain is Extracellular. An elastin-binding region spans residues Gln14–Glu34. A compositionally biased stretch (polar residues) spans Thr64–Ala85. Basic and acidic residues-rich tracts occupy residues Glu103 to Tyr118 and Asp126 to Thr149. Residues Glu150–Pro166 show a composition bias toward polar residues. The span at Ser180–His199 shows a compositional bias: basic and acidic residues. Composition is skewed to low complexity over residues Lys204–Ser225 and Asp233–Ser246. Residues Gly205 to Ser225 form a helical membrane-spanning segment. Residues Lys226–Lys319 are Cytoplasmic-facing. A compositionally biased stretch (basic and acidic residues) spans Thr247 to His259. The span at Gly278 to Ser297 shows a compositional bias: low complexity. Residues Asn299–Lys314 are compositionally biased toward basic and acidic residues. A helical transmembrane segment spans residues Val320–Met340. Residues Ala341–Pro486 are Extracellular-facing. The disordered stretch occupies residues Glu351 to Thr440. Positions Asn361–Glu398 are enriched in basic and acidic residues. Positions Gln403–Gln431 are enriched in low complexity. Residues Gln437–Ile485 form the LysM domain.

Its subcellular location is the cell membrane. Promotes binding of soluble elastin peptides and tropoelastin to S.aureus cells although it is not able to promote bacterial adherence to immobilized elastin and, therefore, is not a microbial surface component recognizing adhesive matrix molecule (MSCRAMM). The sequence is that of Elastin-binding protein EbpS (ebpS) from Staphylococcus aureus (strain Mu50 / ATCC 700699).